Reading from the N-terminus, the 260-residue chain is ProSAAS (260 aa).

A signal peptide spans 1–33 (MAGSPLLWGPRAGGVGLLVLLLLGLFRPPPALC). The tract at residues 34–215 (ARPVKEPRGL…SADSEGVAAP (182 aa)) is proSAAS(1-180). A glycan (O-linked (GalNAc...) threonine) is linked at threonine 53. The segment at 165–188 (RPRPPVYDDGPAGPDAEEAGDETP) is disordered. Over residues 179 to 188 (DAEEAGDETP) the composition is skewed to acidic residues. Positions 221–260 (AADHDVGSELPPEGVLGALLRVKRLETPAPQVPARRLLPP) are C-terminal inhibitory domain; interacts with PCSK1. Serine 228 carries O-linked (GalNAc...) serine glycosylation. The Sufficient for inhibition of PCSK1 signature appears at 239-244 (LLRVKR). O-linked (GalNAc...) threonine glycosylation occurs at threonine 247.

As to quaternary structure, interacts via the C-terminal inhibitory domain with PCSK1 66 kDa form. Proteolytically cleaved in the Golgi. Post-translationally, O-glycosylated with a core 1 or possibly core 8 glycan. As to expression, expressed in brain and pancreas.

Its subcellular location is the secreted. The protein localises to the golgi apparatus. The protein resides in the trans-Golgi network. May function in the control of the neuroendocrine secretory pathway. Proposed be a specific endogenous inhibitor of PCSK1. ProSAAS and Big PEN-LEN, both containing the C-terminal inhibitory domain, but not the further processed peptides reduce PCSK1 activity in the endoplasmic reticulum and Golgi. It reduces the activity of the 84 kDa form but not the autocatalytically derived 66 kDa form of PCSK1. Subsequent processing of proSAAS may eliminate the inhibition. Slows down convertase-mediated processing of proopiomelanocortin and proenkephalin. May control the intracellular timing of PCSK1 rather than its total level of activity. Its function is as follows. Endogenous ligand for GPR171. Neuropeptide involved in the regulation of feeding. The chain is ProSAAS (PCSK1N) from Homo sapiens (Human).